We begin with the raw amino-acid sequence, 63 residues long: Large ribosomal subunit protein uL29 (63 aa).

The protein belongs to the universal ribosomal protein uL29 family.

This chain is Large ribosomal subunit protein uL29, found in Bordetella pertussis (strain Tohama I / ATCC BAA-589 / NCTC 13251).